Consider the following 212-residue polypeptide: MTDLSDIRREYTKGGLRRADLPQNPMQLFELWMTQARDAELSDPTAMCVATVDEHGQPYQRIVLLKRFDDSGFVFFTNLGSRKAQQIAANNKVSLHFPWHPIERQVSILGEAQPLSTAEVLKYFMTRPKDSQIAAWVSQQSSKLSARQVLEGKFFEMKAKFAKGDVPLPSFWGGYLVKPSSIEFWQGGEHRLHDRFLYTRQADEWVIDRLAP.

Residues 8-11 (RREY) and Lys66 each bind substrate. Residues 61 to 66 (RIVLLK), 76 to 77 (FT), Arg82, Lys83, and Gln105 contribute to the FMN site. Tyr123, Arg127, and Ser131 together coordinate substrate. FMN is bound by residues 140 to 141 (QS) and Trp185. 191 to 193 (RLH) contributes to the substrate binding site. Arg195 lines the FMN pocket.

It belongs to the pyridoxamine 5'-phosphate oxidase family. In terms of assembly, homodimer. FMN is required as a cofactor.

The catalysed reaction is pyridoxamine 5'-phosphate + O2 + H2O = pyridoxal 5'-phosphate + H2O2 + NH4(+). The enzyme catalyses pyridoxine 5'-phosphate + O2 = pyridoxal 5'-phosphate + H2O2. The protein operates within cofactor metabolism; pyridoxal 5'-phosphate salvage; pyridoxal 5'-phosphate from pyridoxamine 5'-phosphate: step 1/1. It participates in cofactor metabolism; pyridoxal 5'-phosphate salvage; pyridoxal 5'-phosphate from pyridoxine 5'-phosphate: step 1/1. In terms of biological role, catalyzes the oxidation of either pyridoxine 5'-phosphate (PNP) or pyridoxamine 5'-phosphate (PMP) into pyridoxal 5'-phosphate (PLP). The sequence is that of Pyridoxine/pyridoxamine 5'-phosphate oxidase from Shewanella sp. (strain MR-4).